A 315-amino-acid polypeptide reads, in one-letter code: Putative glycosyltransferase ORF315 (315 aa).

It belongs to the glycosyltransferase group 1 family. Glycosyltransferase 4 subfamily.

The chain is Putative glycosyltransferase ORF315 from Acidianus convivator (ABV).